We begin with the raw amino-acid sequence, 113 residues long: MAARVLASVIVMGSGIIARACTQAYRQALANASKTGVAHEATQTIKRGLTIGEAEARQILGVTEKSSWDEILKKYDTLFERNAQNGSFYLQSKVHRAKECLETAYQKSTTTSA.

The N-terminal 48 residues, 1–48, are a transit peptide targeting the mitochondrion; that stretch reads MAARVLASVIVMGSGIIARACTQAYRQALANASKTGVAHEATQTIKRG. The segment at 55–104 is J-like; sequence EARQILGVTEKSSWDEILKKYDTLFERNAQNGSFYLQSKVHRAKECLETA.

This sequence belongs to the TIM16/PAM16 family. In terms of tissue distribution, expressed at low levels in seedlings, rosettes and inflorescence.

The protein resides in the mitochondrion inner membrane. Functionally, regulates ATP-dependent protein translocation into the mitochondrial matrix. In Arabidopsis thaliana (Mouse-ear cress), this protein is Mitochondrial import inner membrane translocase subunit PAM16 like 1.